The primary structure comprises 430 residues: Long-chain specific acyl-CoA dehydrogenase, mitochondrial (430 aa).

The N-terminal 30 residues, 1–30, are a transit peptide targeting the mitochondrion; it reads MAARLLRGSLRVLGGHRAPRQLPAARCSHS. Lys-42 carries the post-translational modification N6-acetyllysine. Ser-54 bears the Phosphoserine mark. N6-acetyllysine; alternate is present on residues Lys-66 and Lys-81. N6-succinyllysine; alternate is present on residues Lys-66 and Lys-81. Lys-92 and Lys-95 each carry N6-acetyllysine. Position 165 is an N6-succinyllysine (Lys-165). FAD contacts are provided by residues 170–179 and 203–205; these read IAMTEPGAGS and FIS. A substrate-binding site is contributed by Ser-179. 227 to 228 serves as a coordination point for substrate; that stretch reads AH. The residue at position 240 (Lys-240) is an N6-succinyllysine. 2 positions are modified to N6-acetyllysine; alternate: Lys-254 and Lys-279. N6-succinyllysine; alternate occurs at positions 254 and 279. Residues Tyr-282 and 289–292 contribute to the substrate site; that span reads PQER. The active-site Proton acceptor is Glu-291. Arg-317 contributes to the FAD binding site. At Lys-318 the chain carries N6-acetyllysine. An N6-acetyllysine; alternate modification is found at Lys-322. Residue Lys-322 is modified to N6-succinyllysine; alternate. Gln-328 contributes to the FAD binding site. N6-acetyllysine is present on Lys-358. At Ser-362 the chain carries Phosphoserine. Position 385 to 389 (385 to 389) interacts with FAD; that stretch reads QLHGG. Residue 412 to 413 participates in substrate binding; that stretch reads GG. 414–416 contacts FAD; it reads TNE.

It belongs to the acyl-CoA dehydrogenase family. Homotetramer. The cofactor is FAD. Post-translationally, acetylation at Lys-318 and Lys-322 in proximity of the cofactor-binding sites strongly reduces catalytic activity. These sites are deacetylated by SIRT3.

It localises to the mitochondrion matrix. It carries out the reaction a long-chain 2,3-saturated fatty acyl-CoA + oxidized [electron-transfer flavoprotein] + H(+) = a long-chain (2E)-enoyl-CoA + reduced [electron-transfer flavoprotein]. It catalyses the reaction hexanoyl-CoA + oxidized [electron-transfer flavoprotein] + H(+) = (2E)-hexenoyl-CoA + reduced [electron-transfer flavoprotein]. The catalysed reaction is octanoyl-CoA + oxidized [electron-transfer flavoprotein] + H(+) = (2E)-octenoyl-CoA + reduced [electron-transfer flavoprotein]. The enzyme catalyses decanoyl-CoA + oxidized [electron-transfer flavoprotein] + H(+) = (2E)-decenoyl-CoA + reduced [electron-transfer flavoprotein]. It carries out the reaction dodecanoyl-CoA + oxidized [electron-transfer flavoprotein] + H(+) = (2E)-dodecenoyl-CoA + reduced [electron-transfer flavoprotein]. It catalyses the reaction tetradecanoyl-CoA + oxidized [electron-transfer flavoprotein] + H(+) = (2E)-tetradecenoyl-CoA + reduced [electron-transfer flavoprotein]. The catalysed reaction is oxidized [electron-transfer flavoprotein] + hexadecanoyl-CoA + H(+) = (2E)-hexadecenoyl-CoA + reduced [electron-transfer flavoprotein]. The enzyme catalyses octadecanoyl-CoA + oxidized [electron-transfer flavoprotein] + H(+) = (2E)-octadecenoyl-CoA + reduced [electron-transfer flavoprotein]. It carries out the reaction eicosanoyl-CoA + oxidized [electron-transfer flavoprotein] + H(+) = (2E)-eicosenoyl-CoA + reduced [electron-transfer flavoprotein]. It catalyses the reaction docosanoyl-CoA + oxidized [electron-transfer flavoprotein] + H(+) = (2E)-docosenoyl-CoA + reduced [electron-transfer flavoprotein]. The catalysed reaction is tetracosanoyl-CoA + oxidized [electron-transfer flavoprotein] + H(+) = (2E)-tetracosenoyl-CoA + reduced [electron-transfer flavoprotein]. The enzyme catalyses (5E)-tetradecenoyl-CoA + oxidized [electron-transfer flavoprotein] + H(+) = (2E,5E)-tetradecadienoyl-CoA + reduced [electron-transfer flavoprotein]. It carries out the reaction (5Z)-tetradecenoyl-CoA + oxidized [electron-transfer flavoprotein] + H(+) = (2E,5Z)-tetradecadienoyl-CoA + reduced [electron-transfer flavoprotein]. It catalyses the reaction oxidized [electron-transfer flavoprotein] + (9Z)-octadecenoyl-CoA + H(+) = (2E,9Z)-octadecadienoyl-CoA + reduced [electron-transfer flavoprotein]. It participates in lipid metabolism; mitochondrial fatty acid beta-oxidation. Its function is as follows. Long-chain specific acyl-CoA dehydrogenase is one of the acyl-CoA dehydrogenases that catalyze the first step of mitochondrial fatty acid beta-oxidation, an aerobic process breaking down fatty acids into acetyl-CoA and allowing the production of energy from fats. The first step of fatty acid beta-oxidation consists in the removal of one hydrogen from C-2 and C-3 of the straight-chain fatty acyl-CoA thioester, resulting in the formation of trans-2-enoyl-CoA. Among the different mitochondrial acyl-CoA dehydrogenases, long-chain specific acyl-CoA dehydrogenase can act on saturated and unsaturated acyl-CoAs with 6 to 24 carbons with a preference for 8 to 18 carbons long primary chains. This Homo sapiens (Human) protein is Long-chain specific acyl-CoA dehydrogenase, mitochondrial.